Reading from the N-terminus, the 403-residue chain is CCA-adding enzyme (403 aa).

ATP-binding residues include glycine 32 and arginine 35. CTP contacts are provided by glycine 32 and arginine 35. Residues aspartate 45 and aspartate 47 each contribute to the Mg(2+) site. The ATP site is built by arginine 116, aspartate 159, arginine 162, arginine 165, and arginine 168. CTP is bound by residues arginine 116, aspartate 159, arginine 162, arginine 165, and arginine 168.

This sequence belongs to the tRNA nucleotidyltransferase/poly(A) polymerase family. Bacterial CCA-adding enzyme type 3 subfamily. In terms of assembly, homodimer. The cofactor is Mg(2+).

It catalyses the reaction a tRNA precursor + 2 CTP + ATP = a tRNA with a 3' CCA end + 3 diphosphate. The enzyme catalyses a tRNA with a 3' CCA end + 2 CTP + ATP = a tRNA with a 3' CCACCA end + 3 diphosphate. Its function is as follows. Catalyzes the addition and repair of the essential 3'-terminal CCA sequence in tRNAs without using a nucleic acid template. Adds these three nucleotides in the order of C, C, and A to the tRNA nucleotide-73, using CTP and ATP as substrates and producing inorganic pyrophosphate. tRNA 3'-terminal CCA addition is required both for tRNA processing and repair. Also involved in tRNA surveillance by mediating tandem CCA addition to generate a CCACCA at the 3' terminus of unstable tRNAs. While stable tRNAs receive only 3'-terminal CCA, unstable tRNAs are marked with CCACCA and rapidly degraded. This is CCA-adding enzyme from Limosilactobacillus reuteri (strain DSM 20016) (Lactobacillus reuteri).